We begin with the raw amino-acid sequence, 315 residues long: Heme oxygenase 2 (315 aa).

Positions 1-15 (MSSEVETSEGVDESE) are enriched in polar residues. The interval 1-29 (MSSEVETSEGVDESENNSTAPEKENHTKM) is disordered. At S2 the chain carries N-acetylserine. Position 2 is a phosphoserine (S2). At 2-294 (SSEVETSEGV…TAMAVLRKPS (293 aa)) the chain is on the cytoplasmic side. H44, Y153, K198, and R202 together coordinate heme b. HRM repeat units lie at residues 263–268 (KCPFYA) and 280–285 (NCPFRT). C264 and C281 each carry S-nitrosocysteine. Residues 295-315 (LQLILAASVALVAGLLAWYYM) form a helical; Anchor for type IV membrane protein membrane-spanning segment.

Belongs to the heme oxygenase family. In terms of processing, a soluble form arises by proteolytic removal of the membrane anchor. S-nitrosylated by BLVRB. In terms of tissue distribution, widely distributed in body with a high concentration in the brain.

The protein resides in the microsome membrane. The protein localises to the endoplasmic reticulum membrane. The enzyme catalyses heme b + 3 reduced [NADPH--hemoprotein reductase] + 3 O2 = biliverdin IXalpha + CO + Fe(2+) + 3 oxidized [NADPH--hemoprotein reductase] + 3 H2O + H(+). Inhibited by metalloporphyrins such as Sn- and Zn-protoporphyrins. Functionally, catalyzes the oxidative cleavage of heme at the alpha-methene bridge carbon, released as carbon monoxide (CO), to generate biliverdin IXalpha, while releasing the central heme iron chelate as ferrous iron. The polypeptide is Heme oxygenase 2 (Hmox2) (Rattus norvegicus (Rat)).